A 399-amino-acid chain; its full sequence is Protein IQ-DOMAIN 25 (399 aa).

Positions 1 to 8 (MRKNLTKL) match the Nuclear localization signal motif. Calmodulin-binding regions lie at residues 81–91 (KERRTHAIAVA) and 99–110 (DAAVAAAKAAAA). 2 IQ domains span residues 130–158 (EHRA…GVVK) and 159–181 (IQAL…SMEA). Disordered stretches follow at residues 198–219 (NGNA…ENRN), 262–302 (SPLS…SPAR), and 346–377 (LRSH…VRMQ). Polar residues predominate over residues 285–294 (KFPTAQSTPR).

Belongs to the IQD family. As to quaternary structure, binds to multiple calmodulin (CaM) in the presence of Ca(2+) and CaM-like proteins.

The protein localises to the nucleus. It localises to the cell membrane. Functionally, may be involved in cooperative interactions with calmodulins or calmodulin-like proteins. Recruits calmodulin proteins to microtubules, thus being a potential scaffold in cellular signaling and trafficking. May associate with nucleic acids and regulate gene expression at the transcriptional or post-transcriptional level. In Arabidopsis thaliana (Mouse-ear cress), this protein is Protein IQ-DOMAIN 25.